Here is a 293-residue protein sequence, read N- to C-terminus: tRNA pseudouridine synthase B (293 aa).

The active-site Nucleophile is D39.

The protein belongs to the pseudouridine synthase TruB family. Type 1 subfamily.

It carries out the reaction uridine(55) in tRNA = pseudouridine(55) in tRNA. Responsible for synthesis of pseudouridine from uracil-55 in the psi GC loop of transfer RNAs. This is tRNA pseudouridine synthase B from Thermobifida fusca (strain YX).